Here is a 154-residue protein sequence, read N- to C-terminus: NAD(P)H-quinone oxidoreductase subunit N (154 aa).

This sequence belongs to the complex I NdhN subunit family. NDH-1 can be composed of about 15 different subunits; different subcomplexes with different compositions have been identified which probably have different functions.

It localises to the cellular thylakoid membrane. The enzyme catalyses a plastoquinone + NADH + (n+1) H(+)(in) = a plastoquinol + NAD(+) + n H(+)(out). The catalysed reaction is a plastoquinone + NADPH + (n+1) H(+)(in) = a plastoquinol + NADP(+) + n H(+)(out). Its function is as follows. NDH-1 shuttles electrons from an unknown electron donor, via FMN and iron-sulfur (Fe-S) centers, to quinones in the respiratory and/or the photosynthetic chain. The immediate electron acceptor for the enzyme in this species is believed to be plastoquinone. Couples the redox reaction to proton translocation, and thus conserves the redox energy in a proton gradient. Cyanobacterial NDH-1 also plays a role in inorganic carbon-concentration. The protein is NAD(P)H-quinone oxidoreductase subunit N of Prochlorococcus marinus (strain NATL2A).